The primary structure comprises 354 residues: Uroporphyrinogen decarboxylase (354 aa).

Substrate is bound by residues 27-31 (RQAGR), Phe-46, Asp-77, Tyr-154, Thr-209, and His-327.

The protein belongs to the uroporphyrinogen decarboxylase family. Homodimer.

Its subcellular location is the cytoplasm. The enzyme catalyses uroporphyrinogen III + 4 H(+) = coproporphyrinogen III + 4 CO2. Its pathway is porphyrin-containing compound metabolism; protoporphyrin-IX biosynthesis; coproporphyrinogen-III from 5-aminolevulinate: step 4/4. Functionally, catalyzes the decarboxylation of four acetate groups of uroporphyrinogen-III to yield coproporphyrinogen-III. This is Uroporphyrinogen decarboxylase from Escherichia coli O157:H7.